A 263-amino-acid polypeptide reads, in one-letter code: Receptor-transporting protein 1 (263 aa).

The Cytoplasmic portion of the chain corresponds to 1-238 (MRIFRPWRLR…ETGSGCNFCS (238 aa)). The 3CxxC-type zinc finger occupies 88–197 (ASGRFHCSWC…GEFCEACQEG (110 aa)). A helical membrane pass occupies residues 239 to 259 (IPWCLFWATVLMLIIYLQFSF). The Extracellular portion of the chain corresponds to 260–263 (RTSV).

This sequence belongs to the TMEM7 family. Interacts with olfactory receptors. As to expression, predominantly expressed in olfactory and vomeronasal organs, in mature olfactory sensory neurons.

The protein resides in the cell membrane. Specifically promotes functional cell surface expression of olfactory receptors, but not of other GPCRs. The sequence is that of Receptor-transporting protein 1 (Rtp1) from Mus musculus (Mouse).